A 338-amino-acid chain; its full sequence is POU domain, class 4, transcription factor 3 (338 aa).

The POU-IV box signature appears at 56–65; it reads RAEALAAVDI. The tract at residues 91 to 112 is disordered; sequence TSPTVPISHPAALTSHPHHPVH. The region spanning 179-256 is the POU-specific domain; that stretch reads DVESDPRELE…VLQAWLEEAE (78 aa). Residues 274 to 333 constitute a DNA-binding region (homeobox); it reads RKRKRTSIAAPEKRSLEAYFAIQPRPSSEKIAAIAEKLDLKKNVVRVWFCNQRQKQKRMK.

This sequence belongs to the POU transcription factor family. As to quaternary structure, interacts with ISL1. As to expression, expressed in the chochlea of the inner ear.

The protein localises to the nucleus. It localises to the cytoplasm. Functionally, acts as a transcriptional activator. Acts by binding to sequences related to the consensus octamer motif 5'-ATGCAAAT-3' in the regulatory regions of its target genes. Involved in the auditory system development, required for terminal differentiation of hair cells in the inner ear. The protein is POU domain, class 4, transcription factor 3 of Rattus norvegicus (Rat).